The sequence spans 158 residues: Transcription elongation factor GreA (158 aa).

Belongs to the GreA/GreB family.

Its function is as follows. Necessary for efficient RNA polymerase transcription elongation past template-encoded arresting sites. The arresting sites in DNA have the property of trapping a certain fraction of elongating RNA polymerases that pass through, resulting in locked ternary complexes. Cleavage of the nascent transcript by cleavage factors such as GreA or GreB allows the resumption of elongation from the new 3'terminus. GreA releases sequences of 2 to 3 nucleotides. The sequence is that of Transcription elongation factor GreA from Pelobacter propionicus (strain DSM 2379 / NBRC 103807 / OttBd1).